Reading from the N-terminus, the 487-residue chain is Glutamyl-tRNA(Gln) amidotransferase subunit A (487 aa).

Active-site charge relay system residues include lysine 82 and serine 157. Serine 181 acts as the Acyl-ester intermediate in catalysis.

The protein belongs to the amidase family. GatA subfamily. In terms of assembly, heterotrimer of A, B and C subunits.

The enzyme catalyses L-glutamyl-tRNA(Gln) + L-glutamine + ATP + H2O = L-glutaminyl-tRNA(Gln) + L-glutamate + ADP + phosphate + H(+). Allows the formation of correctly charged Gln-tRNA(Gln) through the transamidation of misacylated Glu-tRNA(Gln) in organisms which lack glutaminyl-tRNA synthetase. The reaction takes place in the presence of glutamine and ATP through an activated gamma-phospho-Glu-tRNA(Gln). The sequence is that of Glutamyl-tRNA(Gln) amidotransferase subunit A from Fusobacterium nucleatum subsp. nucleatum (strain ATCC 25586 / DSM 15643 / BCRC 10681 / CIP 101130 / JCM 8532 / KCTC 2640 / LMG 13131 / VPI 4355).